The sequence spans 570 residues: E3 ubiquitin-protein ligase ZFP91 (570 aa).

Over residues 1–12 the composition is skewed to basic and acidic residues; it reads MPGETEEPRPPE. Residues 1 to 306 are disordered; the sequence is MPGETEEPRP…PRLPKRRKKP (306 aa). Low complexity-rich tracts occupy residues 31 to 43 and 59 to 68; these read QRPPEAVAAAPAG and AAAAAAAAAV. The span at 69-82 shows a compositional bias: basic residues; it reads SRRRKAEYPRRRRS. Residues serine 83 and serine 103 each carry the phosphoserine modification. The segment covering 94 to 104 has biased composition (polar residues); sequence QQPQAAKSPSP. A compositionally biased stretch (basic and acidic residues) spans 119–128; that stretch reads VTTDKDPKEE. Positions 207–223 are enriched in acidic residues; sequence SEEEEEEEEEMLISEEE. 2 stretches are compositionally biased toward basic and acidic residues: residues 224-245 and 252-269; these read IPFKDDPRDETYKPHLERETPK and KVKEEKEKKEIKVEVEVE. Acidic residues predominate over residues 270-282; sequence VKEEENEIREDEE. 5 C2H2-type zinc fingers span residues 311-336, 342-366, 372-394, 400-422, and 430-453; these read VRCEMEGCGTVLAHPRYLQHHIKYQH, YVCPHPSCGRLFRLQKQLLRHAKHH, YICEYCARAFKSSHNLAVHRMIH, LQCEICGFTCRQKASLNWHMKKH, and FSCNICGKKFEKKDSVVAHKAKSH. Residues 338 to 368 are interaction with MAP3K14/NIK; that stretch reads LKKKYVCPHPSCGRLFRLQKQLLRHAKHHTD.

Belongs to the krueppel C2H2-type zinc-finger protein family. As to quaternary structure, interacts with MAP3K14/NIK. As to expression, expressed ubiquitously, particularly at high level in testis. Isoform 2 is testis specific.

The protein localises to the nucleus. It catalyses the reaction S-ubiquitinyl-[E2 ubiquitin-conjugating enzyme]-L-cysteine + [acceptor protein]-L-lysine = [E2 ubiquitin-conjugating enzyme]-L-cysteine + N(6)-ubiquitinyl-[acceptor protein]-L-lysine.. It participates in protein modification; protein ubiquitination. Functionally, atypical E3 ubiquitin-protein ligase that mediates 'Lys-63'-linked ubiquitination of MAP3K14/NIK, leading to stabilize and activate MAP3K14/NIK. It thereby acts as an activator of the non-canonical NF-kappa-B2/NFKB2 pathway. May also play an important role in cell proliferation and/or anti-apoptosis. The polypeptide is E3 ubiquitin-protein ligase ZFP91 (ZFP91) (Homo sapiens (Human)).